A 90-amino-acid chain; its full sequence is Small ribosomal subunit protein uS15c (90 aa).

This sequence belongs to the universal ribosomal protein uS15 family. Part of the 30S ribosomal subunit.

It localises to the plastid. Its subcellular location is the chloroplast. The chain is Small ribosomal subunit protein uS15c (rps15) from Buxus microphylla (Littleleaf boxwood).